The following is a 954-amino-acid chain: Alpha-xylosidase BoGH31A (954 aa).

A signal peptide spans 1-20 (MIMNMKNIFYCLLPGLLLGA). Cys-21 carries N-palmitoyl cysteine lipidation. Cys-21 carries the S-diacylglycerol cysteine lipid modification. The region spanning 227-366 (TGQEGALTGT…NPEEQGKQSW (140 aa)) is the PA14 domain. Active-site residues include Asp-553 and Glu-556. The Proton donor role is filled by Asp-630.

This sequence belongs to the glycosyl hydrolase 31 family.

The protein resides in the cell inner membrane. It carries out the reaction Hydrolysis of terminal, non-reducing alpha-D-xylose residues with release of alpha-D-xylose.. It participates in glucan metabolism; xyloglucan degradation. In terms of biological role, catalyzes the liberation of alpha-xylose from the non-reducing terminal glucose of xyloglucan oligosaccharides in xyloglucan degradation, converting the 'X' to 'G' units. The polypeptide is Alpha-xylosidase BoGH31A (Bacteroides ovatus (strain ATCC 8483 / DSM 1896 / JCM 5824 / BCRC 10623 / CCUG 4943 / NCTC 11153)).